The following is a 59-amino-acid chain: Metallothionein-1B (59 aa).

A beta region spans residues 1–29; that stretch reads MPGPCCNDKCVCQEGGCKAGCQCTSCRCS. The a divalent metal cation site is built by cysteine 5, cysteine 6, cysteine 10, cysteine 17, cysteine 21, cysteine 23, cysteine 26, cysteine 28, cysteine 31, cysteine 34, cysteine 38, cysteine 40, cysteine 46, cysteine 50, cysteine 54, cysteine 56, and cysteine 57. The segment at 30-59 is alpha; that stretch reads PCQKCTSGCKCATKEECSKTCTKPCSCCPK.

It belongs to the metallothionein superfamily. Type 3 family.

In terms of biological role, binds six divalent metal ions. Known to bind copper and cadmium. The chain is Metallothionein-1B from Callinectes sapidus (Blue crab).